The following is a 189-amino-acid chain: MRVGVLGVQGSVKEHMDKLKLIKGIEAVEAKDKDTLLTLDALIIPGGESTAIGKILVDFGLKDAILKLNERKVPIWGTCAGMILMAKHIVNDERRHLGIMDITVRRNAYGSQINSFKTRLIIPAISENEIEAVFIRAPYIESVGDGVRILAKYEGKIVAAQQDNLLATAFHPELTDDLSFYRYFLRLNS.

L-glutamine is bound at residue 47-49 (GES). The Nucleophile role is filled by Cys79. Residues Arg106 and 135 to 136 (IR) each bind L-glutamine. Residues His171 and Glu173 each act as charge relay system in the active site.

It belongs to the glutaminase PdxT/SNO family. As to quaternary structure, in the presence of PdxS, forms a dodecamer of heterodimers. Only shows activity in the heterodimer.

The catalysed reaction is aldehydo-D-ribose 5-phosphate + D-glyceraldehyde 3-phosphate + L-glutamine = pyridoxal 5'-phosphate + L-glutamate + phosphate + 3 H2O + H(+). It carries out the reaction L-glutamine + H2O = L-glutamate + NH4(+). It functions in the pathway cofactor biosynthesis; pyridoxal 5'-phosphate biosynthesis. Catalyzes the hydrolysis of glutamine to glutamate and ammonia as part of the biosynthesis of pyridoxal 5'-phosphate. The resulting ammonia molecule is channeled to the active site of PdxS. This Caldanaerobacter subterraneus subsp. tengcongensis (strain DSM 15242 / JCM 11007 / NBRC 100824 / MB4) (Thermoanaerobacter tengcongensis) protein is Pyridoxal 5'-phosphate synthase subunit PdxT.